Here is a 201-residue protein sequence, read N- to C-terminus: Small ribosomal subunit protein uS4c (201 aa).

The interval 17–44 (ALPGLTNKKPRTGSDLRNQSRSGKKSQY) is disordered. One can recognise an S4 RNA-binding domain in the interval 89–149 (MRLDNILFRL…DEQKSRALIQ (61 aa)).

The protein belongs to the universal ribosomal protein uS4 family. In terms of assembly, part of the 30S ribosomal subunit. Contacts protein S5. The interaction surface between S4 and S5 is involved in control of translational fidelity.

The protein resides in the plastid. It localises to the chloroplast. One of the primary rRNA binding proteins, it binds directly to 16S rRNA where it nucleates assembly of the body of the 30S subunit. In terms of biological role, with S5 and S12 plays an important role in translational accuracy. This Solanum bulbocastanum (Wild potato) protein is Small ribosomal subunit protein uS4c (rps4).